A 147-amino-acid polypeptide reads, in one-letter code: Myoglobin (147 aa).

Residues 2–141 (ADFDMVLKCW…IIADMEADYK (140 aa)) enclose the Globin domain. H60 contacts nitrite. H60 serves as a coordination point for O2. Position 89 (H89) interacts with heme b.

The protein belongs to the globin family. As to quaternary structure, monomeric.

The protein resides in the cytoplasm. It is found in the sarcoplasm. The enzyme catalyses Fe(III)-heme b-[protein] + nitric oxide + H2O = Fe(II)-heme b-[protein] + nitrite + 2 H(+). It catalyses the reaction H2O2 + AH2 = A + 2 H2O. Its function is as follows. Monomeric heme protein which primary function is to store oxygen and facilitate its diffusion within muscle tissues. Reversibly binds oxygen through a pentacoordinated heme iron and enables its timely and efficient release as needed during periods of heightened demand. Depending on the oxidative conditions of tissues and cells, and in addition to its ability to bind oxygen, it also has a nitrite reductase activity whereby it regulates the production of bioactive nitric oxide. Under stress conditions, like hypoxia and anoxia, it also protects cells against reactive oxygen species thanks to its pseudoperoxidase activity. The chain is Myoglobin (mb) from Pseudochaenichthys georgianus (South Georgia icefish).